The sequence spans 232 residues: Chalcone synthase (232 aa).

Residue Cys-7 is part of the active site.

It belongs to the thiolase-like superfamily. Chalcone/stilbene synthases family.

The enzyme catalyses (E)-4-coumaroyl-CoA + 3 malonyl-CoA + 3 H(+) = 2',4,4',6'-tetrahydroxychalcone + 3 CO2 + 4 CoA. Its pathway is secondary metabolite biosynthesis; flavonoid biosynthesis. Its function is as follows. The primary product of this enzyme is 4,2',4',6'-tetrahydroxychalcone (also termed naringenin-chalcone or chalcone) which can under specific conditions spontaneously isomerize into naringenin. This chain is Chalcone synthase (CHS), found in Malus domestica (Apple).